Consider the following 268-residue polypeptide: MRRIAVMGAAGRMGKTLVEAVQQRSPASGLTAAIVRPGSTLIGADAGELASLGRIGVSLSGNLEQVADEFDVLIDFTLPDVMLKNLAFCRKAGKAMVIGTTGLTLEQKQLLAEAGKDIPIVFAANFSVGVNLSLKLLDLAARVLGDEADIEIIETHHRHKIDAPSGTALRMGEAIADALGRDLSKVAVYGREGHTGARARDTIGFATVRGGDVVGDHTVLFASEGERLEITHKASSRMTFAKGAVRAALWLEGRAAGLYDMRDVLDLH.

8 to 13 (GAAGRM) lines the NAD(+) pocket. Arg36 serves as a coordination point for NADP(+). NAD(+) is bound by residues 99-101 (GTT) and 123-126 (AANF). His156 (proton donor/acceptor) is an active-site residue. His157 lines the (S)-2,3,4,5-tetrahydrodipicolinate pocket. Lys160 serves as the catalytic Proton donor. (S)-2,3,4,5-tetrahydrodipicolinate is bound at residue 166–167 (GT).

It belongs to the DapB family.

It is found in the cytoplasm. It carries out the reaction (S)-2,3,4,5-tetrahydrodipicolinate + NAD(+) + H2O = (2S,4S)-4-hydroxy-2,3,4,5-tetrahydrodipicolinate + NADH + H(+). The catalysed reaction is (S)-2,3,4,5-tetrahydrodipicolinate + NADP(+) + H2O = (2S,4S)-4-hydroxy-2,3,4,5-tetrahydrodipicolinate + NADPH + H(+). Its pathway is amino-acid biosynthesis; L-lysine biosynthesis via DAP pathway; (S)-tetrahydrodipicolinate from L-aspartate: step 4/4. Functionally, catalyzes the conversion of 4-hydroxy-tetrahydrodipicolinate (HTPA) to tetrahydrodipicolinate. This Pseudomonas fluorescens (strain SBW25) protein is 4-hydroxy-tetrahydrodipicolinate reductase.